A 162-amino-acid polypeptide reads, in one-letter code: UPF0114 protein VCM66_0196 (162 aa).

The next 4 helical transmembrane spans lie at 15–35, 53–73, 109–126, and 136–156; these read IMAP…IKFF, LILV…IVMV, VSAS…KVFM, and IKWY…MGYL.

Belongs to the UPF0114 family.

It is found in the cell membrane. This chain is UPF0114 protein VCM66_0196, found in Vibrio cholerae serotype O1 (strain M66-2).